We begin with the raw amino-acid sequence, 278 residues long: Indole-3-glycerol phosphate synthase (278 aa).

The protein belongs to the TrpC family.

It catalyses the reaction 1-(2-carboxyphenylamino)-1-deoxy-D-ribulose 5-phosphate + H(+) = (1S,2R)-1-C-(indol-3-yl)glycerol 3-phosphate + CO2 + H2O. It participates in amino-acid biosynthesis; L-tryptophan biosynthesis; L-tryptophan from chorismate: step 4/5. The polypeptide is Indole-3-glycerol phosphate synthase (trpC) (Pseudomonas aeruginosa (strain ATCC 15692 / DSM 22644 / CIP 104116 / JCM 14847 / LMG 12228 / 1C / PRS 101 / PAO1)).